Consider the following 104-residue polypeptide: Iron-sulfur cluster assembly protein CyaY (104 aa).

Belongs to the frataxin family.

Involved in iron-sulfur (Fe-S) cluster assembly. May act as a regulator of Fe-S biogenesis. The sequence is that of Iron-sulfur cluster assembly protein CyaY from Aliivibrio fischeri (strain MJ11) (Vibrio fischeri).